The primary structure comprises 376 residues: Glutamate 5-kinase (376 aa).

K15 lines the ATP pocket. S56, D143, and N155 together coordinate substrate. ATP is bound at residue 175-176 (SD). The 78-residue stretch at 281-358 (KGTLTIDAGA…PDVMMILGIT (78 aa)) folds into the PUA domain.

This sequence belongs to the glutamate 5-kinase family.

It localises to the cytoplasm. It catalyses the reaction L-glutamate + ATP = L-glutamyl 5-phosphate + ADP. It participates in amino-acid biosynthesis; L-proline biosynthesis; L-glutamate 5-semialdehyde from L-glutamate: step 1/2. Functionally, catalyzes the transfer of a phosphate group to glutamate to form L-glutamate 5-phosphate. The polypeptide is Glutamate 5-kinase (Rhodopseudomonas palustris (strain TIE-1)).